The primary structure comprises 953 residues: Valine--tRNA ligase (953 aa).

A 'HIGH' region motif is present at residues 42 to 52 (PNVTGSLHMGH). Residues 554-558 (KMSKS) carry the 'KMSKS' region motif. Position 557 (K557) interacts with ATP. The stretch at 884–952 (LIDKDAELDR…LEQQKATIAA (69 aa)) forms a coiled coil.

The protein belongs to the class-I aminoacyl-tRNA synthetase family. ValS type 1 subfamily. As to quaternary structure, monomer.

It localises to the cytoplasm. The catalysed reaction is tRNA(Val) + L-valine + ATP = L-valyl-tRNA(Val) + AMP + diphosphate. Functionally, catalyzes the attachment of valine to tRNA(Val). As ValRS can inadvertently accommodate and process structurally similar amino acids such as threonine, to avoid such errors, it has a 'posttransfer' editing activity that hydrolyzes mischarged Thr-tRNA(Val) in a tRNA-dependent manner. This chain is Valine--tRNA ligase, found in Vibrio cholerae serotype O1 (strain ATCC 39315 / El Tor Inaba N16961).